The following is a 120-amino-acid chain: Large ribosomal subunit protein bL20 (120 aa).

It belongs to the bacterial ribosomal protein bL20 family.

Functionally, binds directly to 23S ribosomal RNA and is necessary for the in vitro assembly process of the 50S ribosomal subunit. It is not involved in the protein synthesizing functions of that subunit. The chain is Large ribosomal subunit protein bL20 from Methylacidiphilum infernorum (isolate V4) (Methylokorus infernorum (strain V4)).